Consider the following 350-residue polypeptide: Methylthioribose-1-phosphate isomerase (350 aa).

Residues 48–50 (RGA), R93, and Q198 each bind substrate. The Proton donor role is filled by D239. 249–250 (NK) is a binding site for substrate.

Belongs to the eIF-2B alpha/beta/delta subunits family. MtnA subfamily.

The enzyme catalyses 5-(methylsulfanyl)-alpha-D-ribose 1-phosphate = 5-(methylsulfanyl)-D-ribulose 1-phosphate. It functions in the pathway amino-acid biosynthesis; L-methionine biosynthesis via salvage pathway; L-methionine from S-methyl-5-thio-alpha-D-ribose 1-phosphate: step 1/6. Functionally, catalyzes the interconversion of methylthioribose-1-phosphate (MTR-1-P) into methylthioribulose-1-phosphate (MTRu-1-P). This is Methylthioribose-1-phosphate isomerase from Fervidobacterium nodosum (strain ATCC 35602 / DSM 5306 / Rt17-B1).